Reading from the N-terminus, the 322-residue chain is Extracellular metalloprotease AFUA_1G07730 (322 aa).

The signal sequence occupies residues 1–22 (MLPFNSCVYVLLIISLMSNCRA). Residues asparagine 123 and asparagine 197 are each glycosylated (N-linked (GlcNAc...) asparagine). Histidine 233 lines the Zn(2+) pocket. Residue glutamate 234 is part of the active site. Residue histidine 237 coordinates Zn(2+). A disulfide bond links cysteine 272 and cysteine 299.

The protein belongs to the peptidase M43B family.

It localises to the secreted. Its function is as follows. Secreted metalloproteinase that allows assimilation of proteinaceous substrates. Plays a pivotal role as a pathogenicity determinant during infections and contributes to the ability of the pathogen to persist within the mammalian host. This is Extracellular metalloprotease AFUA_1G07730 from Aspergillus fumigatus (strain ATCC MYA-4609 / CBS 101355 / FGSC A1100 / Af293) (Neosartorya fumigata).